A 243-amino-acid polypeptide reads, in one-letter code: Complement C1q tumor necrosis factor-related protein 5 (243 aa).

An N-terminal signal peptide occupies residues 1–15 (MRPLLVLLLLGLAAG). The interval 15–125 (GSPPLDDNKI…PPPSDAPLPF (111 aa)) is disordered. The 66-residue stretch at 30 to 95 (GHPGLPGTPG…AGPAGPTGPA (66 aa)) folds into the Collagen-like domain. Residues 83 to 96 (RGEAGPAGPTGPAG) show a composition bias toward low complexity. The C1q domain occupies 99-238 (SVPPRSAFSA…GFLVYSDWHS (140 aa)).

May interact with ERFE. Homotrimer (via collagen-like domain). May form higher order oligomers by supercoiling of the trimers.

It is found in the secreted. The sequence is that of Complement C1q tumor necrosis factor-related protein 5 (C1QTNF5) from Homo sapiens (Human).